Reading from the N-terminus, the 212-residue chain is Thymidylate kinase (212 aa).

10–17 (GPDGAGKT) contributes to the ATP binding site.

The protein belongs to the thymidylate kinase family.

The enzyme catalyses dTMP + ATP = dTDP + ADP. Functionally, phosphorylation of dTMP to form dTDP in both de novo and salvage pathways of dTTP synthesis. The protein is Thymidylate kinase of Exiguobacterium sibiricum (strain DSM 17290 / CCUG 55495 / CIP 109462 / JCM 13490 / 255-15).